We begin with the raw amino-acid sequence, 378 residues long: Mating-type protein MAT-1 (378 aa).

A DNA-binding region (alpha box) is located at residues lysine 60–arginine 117.

The protein belongs to the MATALPHA1 family.

Its subcellular location is the nucleus. Mating type proteins are sequence specific DNA-binding proteins that act as master switches in fungal differentiation by controlling gene expression in a cell type-specific fashion. Transcriptional activator that induces the transcription of alpha-specific genes. This Cochliobolus sativus (Common root rot and spot blotch fungus) protein is Mating-type protein MAT-1 (MAT1).